The following is a 388-amino-acid chain: 2-epi-5-epi-valiolone synthase (388 aa).

NAD(+) contacts are provided by residues 92–95, 124–128, 148–149, K161, K170, and 188–191; these read ERNK, GIVAD, TT, and LLAT. Zn(2+)-binding residues include E203, H267, and H283.

The protein belongs to the sugar phosphate cyclases superfamily. EEVS-like family. It depends on NAD(+) as a cofactor. Co(2+) is required as a cofactor. Requires Zn(2+) as cofactor.

The catalysed reaction is D-sedoheptulose 7-phosphate = 2-epi-5-epi-valiolone + phosphate. Functionally, catalyzes the cyclization of D-sedoheptulose 7-phosphate to 2-epi-5-epi-valiolone. Probably involved in acarbose biosynthesis. The polypeptide is 2-epi-5-epi-valiolone synthase (Streptomyces glaucescens).